The following is a 25-amino-acid chain: Unknown protein 7 (25 aa).

Residues 1 to 25 (MENGKVHVASMSGLSMPHMNEMLEK) are disordered.

The protein is Unknown protein 7 of Pseudotsuga menziesii (Douglas-fir).